Reading from the N-terminus, the 356-residue chain is Histidinol-phosphate aminotransferase (356 aa).

K214 carries the N6-(pyridoxal phosphate)lysine modification.

It belongs to the class-II pyridoxal-phosphate-dependent aminotransferase family. Histidinol-phosphate aminotransferase subfamily. Homodimer. The cofactor is pyridoxal 5'-phosphate.

It carries out the reaction L-histidinol phosphate + 2-oxoglutarate = 3-(imidazol-4-yl)-2-oxopropyl phosphate + L-glutamate. Its pathway is amino-acid biosynthesis; L-histidine biosynthesis; L-histidine from 5-phospho-alpha-D-ribose 1-diphosphate: step 7/9. This chain is Histidinol-phosphate aminotransferase, found in Shigella boydii serotype 18 (strain CDC 3083-94 / BS512).